Consider the following 206-residue polypeptide: Recombination protein RecR (206 aa).

A C4-type zinc finger spans residues 60 to 75 (CAMCNTFCEGGLCDIC). Residues 83 to 178 (RRLMVVHMPA…KVSRLSQGIP (96 aa)) enclose the Toprim domain.

It belongs to the RecR family.

May play a role in DNA repair. It seems to be involved in an RecBC-independent recombinational process of DNA repair. It may act with RecF and RecO. The polypeptide is Recombination protein RecR (Neisseria meningitidis serogroup B (strain ATCC BAA-335 / MC58)).